The chain runs to 469 residues: Protopanaxadiol 6-hydroxylase (469 aa).

The helical transmembrane segment at 3-23 (LFISSQLLLLLVFCLFLFWNF) threads the bilayer. Cysteine 416 is a binding site for heme.

It belongs to the cytochrome P450 family. Requires heme as cofactor. As to expression, accumulates ubiquitously in all organs of plants, including roots, stems and leaves.

The protein localises to the membrane. It carries out the reaction (20S)-protopanaxadiol + reduced [NADPH--hemoprotein reductase] + O2 = (20S)-protopanaxatriol + oxidized [NADPH--hemoprotein reductase] + H2O + H(+). Its pathway is secondary metabolite biosynthesis; terpenoid biosynthesis. Activated by N,N'-dicyclohexylcarbodiimide (DCCD) thus leading to increased ginsenosides accumulation. In terms of biological role, component of the dammarane-type triterpene saponins (e.g. PPT-type ginsenosides or panaxosides) biosynthetic pathway. Catalyzes the formation of protopanaxatriol from protopanaxadiol during ginsenoside biosynthesis, a class of tetracyclic triterpenoid saponins. The polypeptide is Protopanaxadiol 6-hydroxylase (Panax ginseng (Korean ginseng)).